Here is a 531-residue protein sequence, read N- to C-terminus: UDP-glucuronosyltransferase 2B13 (531 aa).

Positions 1 to 24 are cleaved as a signal peptide; the sequence is MPVKCISVLLLLLQLSCCFSSGSC. Residues Asn69, Asn101, and Asn317 are each glycosylated (N-linked (GlcNAc...) asparagine). Residues 495–511 form a helical membrane-spanning segment; it reads VIGFLLACVAITTYLIV.

Belongs to the UDP-glycosyltransferase family.

The protein resides in the microsome membrane. The protein localises to the endoplasmic reticulum membrane. The catalysed reaction is glucuronate acceptor + UDP-alpha-D-glucuronate = acceptor beta-D-glucuronoside + UDP + H(+). Functionally, UDPGT is of major importance in the conjugation and subsequent elimination of potentially toxic xenobiotics and endogenous compounds. Acts on small phenolic agents such as 2-beta-naphthol and 4-methylumbelliferone as well as bulky phenolic compounds like 2-hydroxy- and 4-hydroxybiphenyl. In contrast to 2B16 it is active toward octylgallate. This is UDP-glucuronosyltransferase 2B13 (UGT2B13) from Oryctolagus cuniculus (Rabbit).